Here is a 256-residue protein sequence, read N- to C-terminus: Isoprenyl transferase (256 aa).

The active site involves aspartate 33. Position 33 (aspartate 33) interacts with Mg(2+). Substrate is bound by residues 34–37 (GNGR), tryptophan 38, arginine 46, histidine 50, and 78–80 (STE). The active-site Proton acceptor is the asparagine 81. Substrate is bound by residues tryptophan 82, arginine 84, arginine 201, and 207 to 209 (RIS). Residue glutamate 220 coordinates Mg(2+).

The protein belongs to the UPP synthase family. In terms of assembly, homodimer. Mg(2+) serves as cofactor.

In terms of biological role, catalyzes the condensation of isopentenyl diphosphate (IPP) with allylic pyrophosphates generating different type of terpenoids. This Staphylococcus aureus (strain COL) protein is Isoprenyl transferase.